Consider the following 231-residue polypeptide: Orotidine 5'-phosphate decarboxylase (231 aa).

Substrate is bound by residues Asp11, Lys34, 61 to 70 (DLKLHDIPNT), Thr117, Arg179, Gln188, Gly208, and Arg209. Residue Lys63 is the Proton donor of the active site.

It belongs to the OMP decarboxylase family. Type 1 subfamily. In terms of assembly, homodimer.

The enzyme catalyses orotidine 5'-phosphate + H(+) = UMP + CO2. It functions in the pathway pyrimidine metabolism; UMP biosynthesis via de novo pathway; UMP from orotate: step 2/2. Its function is as follows. Catalyzes the decarboxylation of orotidine 5'-monophosphate (OMP) to uridine 5'-monophosphate (UMP). In Streptococcus suis (strain 98HAH33), this protein is Orotidine 5'-phosphate decarboxylase.